Here is a 646-residue protein sequence, read N- to C-terminus: Exoribonuclease 2 (646 aa).

The region spanning 191 to 518 is the RNB domain; sequence RIDLTALDFV…NHRLLKAIIQ (328 aa). Residues 563–645 enclose the S1 motif domain; the sequence is DKTFSAEIVD…ETRNIVARPV (83 aa).

The protein belongs to the RNR ribonuclease family. RNase II subfamily.

It localises to the cytoplasm. It carries out the reaction Exonucleolytic cleavage in the 3'- to 5'-direction to yield nucleoside 5'-phosphates.. Its function is as follows. Involved in mRNA degradation. Hydrolyzes single-stranded polyribonucleotides processively in the 3' to 5' direction. The chain is Exoribonuclease 2 from Xenorhabdus bovienii (strain SS-2004) (Xenorhabdus nematophila subsp. bovienii).